We begin with the raw amino-acid sequence, 408 residues long: Na(+)-translocating NADH-quinone reductase subunit F (408 aa).

The helical transmembrane segment at 4–24 (IYLGVGMFIAIVLALVLIIMF) threads the bilayer. The 2Fe-2S ferredoxin-type domain maps to 33–127 (GEVTISINGD…DMDIELPEEI (95 aa)). C70, C76, C79, and C111 together coordinate [2Fe-2S] cluster. The 141-residue stretch at 130–270 (IKKWDCEVIS…SGPFGEFFAK (141 aa)) folds into the FAD-binding FR-type domain.

The protein belongs to the NqrF family. Composed of six subunits; NqrA, NqrB, NqrC, NqrD, NqrE and NqrF. Requires [2Fe-2S] cluster as cofactor. FAD serves as cofactor.

It is found in the cell inner membrane. It carries out the reaction a ubiquinone + n Na(+)(in) + NADH + H(+) = a ubiquinol + n Na(+)(out) + NAD(+). In terms of biological role, NQR complex catalyzes the reduction of ubiquinone-1 to ubiquinol by two successive reactions, coupled with the transport of Na(+) ions from the cytoplasm to the periplasm. The first step is catalyzed by NqrF, which accepts electrons from NADH and reduces ubiquinone-1 to ubisemiquinone by a one-electron transfer pathway. In Pseudoalteromonas atlantica (strain T6c / ATCC BAA-1087), this protein is Na(+)-translocating NADH-quinone reductase subunit F.